The primary structure comprises 278 residues: Ribosomal RNA small subunit methyltransferase A (278 aa).

Residues Asn18, Leu20, Gly45, Glu66, Asp89, and Asn110 each coordinate S-adenosyl-L-methionine.

The protein belongs to the class I-like SAM-binding methyltransferase superfamily. rRNA adenine N(6)-methyltransferase family. RsmA subfamily.

The protein resides in the cytoplasm. It carries out the reaction adenosine(1518)/adenosine(1519) in 16S rRNA + 4 S-adenosyl-L-methionine = N(6)-dimethyladenosine(1518)/N(6)-dimethyladenosine(1519) in 16S rRNA + 4 S-adenosyl-L-homocysteine + 4 H(+). Specifically dimethylates two adjacent adenosines (A1518 and A1519) in the loop of a conserved hairpin near the 3'-end of 16S rRNA in the 30S particle. May play a critical role in biogenesis of 30S subunits. This Cupriavidus metallidurans (strain ATCC 43123 / DSM 2839 / NBRC 102507 / CH34) (Ralstonia metallidurans) protein is Ribosomal RNA small subunit methyltransferase A.